A 352-amino-acid chain; its full sequence is NADP-dependent isopropanol dehydrogenase (352 aa).

The Zn(2+) site is built by C37, H59, and D150. NADP(+) is bound by residues 175-178 (IGPV), 198-200 (GSR), Y218, 265-267 (VNY), and K340.

This sequence belongs to the zinc-containing alcohol dehydrogenase family. In terms of assembly, homotetramer. It depends on Zn(2+) as a cofactor.

The enzyme catalyses propan-2-ol + NADP(+) = acetone + NADPH + H(+). Functionally, alcohol dehydrogenase with a preference for medium chain secondary alcohols, such as 2-butanol and isopropanol. Has very low activity with primary alcohols, such as ethanol. Under physiological conditions, the enzyme reduces aldehydes and 2-ketones to produce secondary alcohols. Is also active with acetaldehyde and propionaldehyde. In Thermoanaerobacter brockii (Thermoanaerobium brockii), this protein is NADP-dependent isopropanol dehydrogenase (adh).